A 1243-amino-acid chain; its full sequence is Protein MMS22-like (1243 aa).

This sequence belongs to the MMS22 family. MMS22L subfamily. As to quaternary structure, component of the MMS22L-TONSL complex, a complex at least composed of MMS22L and TONSL/NFKBIL2. Interacts with RAD51; interaction is direct. In terms of processing, degraded by the ubiquitin-proteasome system upon replication stress.

The protein localises to the nucleus. It is found in the chromosome. In terms of biological role, component of the MMS22L-TONSL complex, a complex that promotes homologous recombination-mediated repair of double-strand breaks (DSBs) at stalled or collapsed replication forks. The MMS22L-TONSL complex is required to maintain genome integrity during DNA replication. It mediates the assembly of RAD51 filaments on single-stranded DNA (ssDNA): the MMS22L-TONSL complex is recruited to DSBs following histone replacement by histone chaperones and eviction of the replication protein A complex (RPA/RP-A) from DSBs. Following recruitment to DSBs, the TONSL-MMS22L complex promotes recruitment of RAD51 filaments and subsequent homologous recombination. Within the complex, MMS22L acts by binding ssDNA. This chain is Protein MMS22-like, found in Homo sapiens (Human).